We begin with the raw amino-acid sequence, 163 residues long: Intron-encoded endonuclease I-PpoI (163 aa).

As to quaternary structure, homodimer. Requires Zn(2+) as cofactor.

Mediates the homing of a group I intron in the ribosomal DNA. Makes a four-base staggered cut in its ribosomal DNA target sequence. This Physarum polycephalum (Slime mold) protein is Intron-encoded endonuclease I-PpoI.